The sequence spans 401 residues: Exodeoxyribonuclease 7 large subunit (401 aa).

This sequence belongs to the XseA family. As to quaternary structure, heterooligomer composed of large and small subunits.

The protein localises to the cytoplasm. The enzyme catalyses Exonucleolytic cleavage in either 5'- to 3'- or 3'- to 5'-direction to yield nucleoside 5'-phosphates.. Functionally, bidirectionally degrades single-stranded DNA into large acid-insoluble oligonucleotides, which are then degraded further into small acid-soluble oligonucleotides. The polypeptide is Exodeoxyribonuclease 7 large subunit (Syntrophotalea carbinolica (strain DSM 2380 / NBRC 103641 / GraBd1) (Pelobacter carbinolicus)).